A 175-amino-acid polypeptide reads, in one-letter code: Crossover junction endodeoxyribonuclease RuvC (175 aa).

Residues D16, E76, and D148 contribute to the active site. Residues D16, E76, and D148 each contribute to the Mg(2+) site.

The protein belongs to the RuvC family. In terms of assembly, homodimer which binds Holliday junction (HJ) DNA. The HJ becomes 2-fold symmetrical on binding to RuvC with unstacked arms; it has a different conformation from HJ DNA in complex with RuvA. In the full resolvosome a probable DNA-RuvA(4)-RuvB(12)-RuvC(2) complex forms which resolves the HJ. Requires Mg(2+) as cofactor.

The protein resides in the cytoplasm. It catalyses the reaction Endonucleolytic cleavage at a junction such as a reciprocal single-stranded crossover between two homologous DNA duplexes (Holliday junction).. Its function is as follows. The RuvA-RuvB-RuvC complex processes Holliday junction (HJ) DNA during genetic recombination and DNA repair. Endonuclease that resolves HJ intermediates. Cleaves cruciform DNA by making single-stranded nicks across the HJ at symmetrical positions within the homologous arms, yielding a 5'-phosphate and a 3'-hydroxyl group; requires a central core of homology in the junction. The consensus cleavage sequence is 5'-(A/T)TT(C/G)-3'. Cleavage occurs on the 3'-side of the TT dinucleotide at the point of strand exchange. HJ branch migration catalyzed by RuvA-RuvB allows RuvC to scan DNA until it finds its consensus sequence, where it cleaves and resolves the cruciform DNA. This is Crossover junction endodeoxyribonuclease RuvC from Bradyrhizobium sp. (strain ORS 278).